An 840-amino-acid chain; its full sequence is Probable alpha-glucuronidase A (840 aa).

The signal sequence occupies residues Met1 to Ala19. N-linked (GlcNAc...) asparagine glycans are attached at residues Asn222, Asn310, Asn465, Asn527, Asn576, Asn682, and Asn732.

Belongs to the glycosyl hydrolase 67 family.

The protein localises to the secreted. The catalysed reaction is an alpha-D-glucuronoside + H2O = D-glucuronate + an alcohol. In terms of biological role, alpha-glucuronidase involved in the hydrolysis of xylan, a major structural heterogeneous polysaccharide found in plant biomass representing the second most abundant polysaccharide in the biosphere, after cellulose. Releases 4-O-methylglucuronic acid from xylan. This Aspergillus clavatus (strain ATCC 1007 / CBS 513.65 / DSM 816 / NCTC 3887 / NRRL 1 / QM 1276 / 107) protein is Probable alpha-glucuronidase A (aguA).